The following is a 130-amino-acid chain: Small ribosomal subunit protein uS9 (130 aa).

The interval Leu-98–Arg-130 is disordered. Residues Lys-111–Arg-130 show a composition bias toward basic residues.

It belongs to the universal ribosomal protein uS9 family.

The protein is Small ribosomal subunit protein uS9 of Staphylococcus haemolyticus (strain JCSC1435).